Consider the following 338-residue polypeptide: Methionine synthase (338 aa).

Residues His-210, Cys-212, Glu-234, and Cys-294 each coordinate Zn(2+).

This sequence belongs to the archaeal MetE family. Zn(2+) serves as cofactor.

Its pathway is amino-acid biosynthesis; L-methionine biosynthesis via de novo pathway. Catalyzes the transfer of a methyl group to L-homocysteine resulting in methionine formation. The physiological methyl donor is unknown. This is Methionine synthase from Pyrococcus abyssi (strain GE5 / Orsay).